We begin with the raw amino-acid sequence, 394 residues long: NAD(P)H-quinone oxidoreductase subunit H (394 aa).

It belongs to the complex I 49 kDa subunit family. NDH-1 can be composed of about 15 different subunits; different subcomplexes with different compositions have been identified which probably have different functions.

The protein localises to the cellular thylakoid membrane. The catalysed reaction is a plastoquinone + NADH + (n+1) H(+)(in) = a plastoquinol + NAD(+) + n H(+)(out). It catalyses the reaction a plastoquinone + NADPH + (n+1) H(+)(in) = a plastoquinol + NADP(+) + n H(+)(out). Functionally, NDH-1 shuttles electrons from an unknown electron donor, via FMN and iron-sulfur (Fe-S) centers, to quinones in the respiratory and/or the photosynthetic chain. The immediate electron acceptor for the enzyme in this species is believed to be plastoquinone. Couples the redox reaction to proton translocation, and thus conserves the redox energy in a proton gradient. Cyanobacterial NDH-1 also plays a role in inorganic carbon-concentration. The protein is NAD(P)H-quinone oxidoreductase subunit H of Synechococcus sp. (strain JA-3-3Ab) (Cyanobacteria bacterium Yellowstone A-Prime).